A 168-amino-acid polypeptide reads, in one-letter code: Cysteine-rich perinuclear theca protein 1 (168 aa).

The disordered stretch occupies residues 144-168 (NVSDPEEVPPCLDSDPFPNGDLASS).

Specifically expressed in spermatozoa (at protein level). Detected from the elongated spermatid stage onwards; not found in immature germ cells or somatic cells (at protein level).

It is found in the cytoplasm. It localises to the cytoskeleton. The protein localises to the perinuclear theca. This chain is Cysteine-rich perinuclear theca protein 1, found in Mus musculus (Mouse).